A 672-amino-acid polypeptide reads, in one-letter code: Probable copper-transporting P-type ATPase B (672 aa).

Positions 1–17 are enriched in basic and acidic residues; the sequence is MEHHSHQEHENHTSHGN. Residues 1–22 form a disordered region; that stretch reads MEHHSHQEHENHTSHGNHEHHH. Transmembrane regions (helical) follow at residues 30 to 50, 55 to 75, 93 to 113, 125 to 145, 282 to 302, and 313 to 333; these read FFIS…MGVK, ISFT…FFYG, GMMT…LYAF, TMDF…GHWI, GYLF…WMLI, and LVTV…PLVT. The 4-aspartylphosphate intermediate role is filled by aspartate 365. Residues aspartate 563 and aspartate 567 each contribute to the Mg(2+) site. The next 2 membrane-spanning stretches (helical) occupy residues 621 to 643 and 647 to 669; these read LWWG…ASIG and SPAV…AFTL.

This sequence belongs to the cation transport ATPase (P-type) (TC 3.A.3) family. Type IB subfamily.

The protein localises to the cell membrane. The enzyme catalyses Cu(+)(in) + ATP + H2O = Cu(+)(out) + ADP + phosphate + H(+). Functionally, involved in copper transport. The polypeptide is Probable copper-transporting P-type ATPase B (copB) (Staphylococcus aureus).